A 380-amino-acid chain; its full sequence is Chaperone protein DnaJ (380 aa).

The J domain maps to D5 to G70. The segment at G136–A214 adopts a CR-type zinc-finger fold. 8 residues coordinate Zn(2+): C149, C152, C166, C169, C188, C191, C202, and C205. CXXCXGXG motif repeat units follow at residues C149–G156, C166–G173, C188–G195, and C202–G209.

The protein belongs to the DnaJ family. As to quaternary structure, homodimer. Zn(2+) is required as a cofactor.

The protein localises to the cytoplasm. In terms of biological role, participates actively in the response to hyperosmotic and heat shock by preventing the aggregation of stress-denatured proteins and by disaggregating proteins, also in an autonomous, DnaK-independent fashion. Unfolded proteins bind initially to DnaJ; upon interaction with the DnaJ-bound protein, DnaK hydrolyzes its bound ATP, resulting in the formation of a stable complex. GrpE releases ADP from DnaK; ATP binding to DnaK triggers the release of the substrate protein, thus completing the reaction cycle. Several rounds of ATP-dependent interactions between DnaJ, DnaK and GrpE are required for fully efficient folding. Also involved, together with DnaK and GrpE, in the DNA replication of plasmids through activation of initiation proteins. The polypeptide is Chaperone protein DnaJ (Actinobacillus pleuropneumoniae serotype 5b (strain L20)).